The following is a 511-amino-acid chain: D-alanine--D-alanyl carrier protein ligase (511 aa).

152–153 serves as a coordination point for ATP; it reads TS. Asp-199 contacts D-alanine. An ATP-binding site is contributed by 294-299; sequence NAYGPT. Val-303 is a binding site for D-alanine. ATP-binding positions include Asp-385, 397 to 400, and Lys-499; that span reads YGGR. A D-alanine-binding site is contributed by Lys-499.

Belongs to the ATP-dependent AMP-binding enzyme family. DltA subfamily.

The protein resides in the cytoplasm. It catalyses the reaction holo-[D-alanyl-carrier protein] + D-alanine + ATP = D-alanyl-[D-alanyl-carrier protein] + AMP + diphosphate. It participates in cell wall biogenesis; lipoteichoic acid biosynthesis. Functionally, catalyzes the first step in the D-alanylation of lipoteichoic acid (LTA), the activation of D-alanine and its transfer onto the D-alanyl carrier protein (Dcp) DltC. In an ATP-dependent two-step reaction, forms a high energy D-alanyl-AMP intermediate, followed by transfer of the D-alanyl residue as a thiol ester to the phosphopantheinyl prosthetic group of the Dcp. D-alanylation of LTA plays an important role in modulating the properties of the cell wall in Gram-positive bacteria, influencing the net charge of the cell wall. In Streptococcus agalactiae serotype III (strain NEM316), this protein is D-alanine--D-alanyl carrier protein ligase.